The sequence spans 391 residues: Formate-dependent phosphoribosylglycinamide formyltransferase (391 aa).

N(1)-(5-phospho-beta-D-ribosyl)glycinamide-binding positions include 20-21 (EL) and Glu-80. ATP is bound by residues Arg-112, Lys-153, 158-163 (SSGKGQ), 193-196 (EGFI), and Glu-201. Residues 117–306 (RLAAETLGLP…EFALHVRAIQ (190 aa)) enclose the ATP-grasp domain. Mg(2+)-binding residues include Glu-265 and Glu-277. Residues Asp-284, Lys-354, and 361-362 (RR) each bind N(1)-(5-phospho-beta-D-ribosyl)glycinamide.

This sequence belongs to the PurK/PurT family. As to quaternary structure, homodimer.

The catalysed reaction is N(1)-(5-phospho-beta-D-ribosyl)glycinamide + formate + ATP = N(2)-formyl-N(1)-(5-phospho-beta-D-ribosyl)glycinamide + ADP + phosphate + H(+). It functions in the pathway purine metabolism; IMP biosynthesis via de novo pathway; N(2)-formyl-N(1)-(5-phospho-D-ribosyl)glycinamide from N(1)-(5-phospho-D-ribosyl)glycinamide (formate route): step 1/1. Its function is as follows. Involved in the de novo purine biosynthesis. Catalyzes the transfer of formate to 5-phospho-ribosyl-glycinamide (GAR), producing 5-phospho-ribosyl-N-formylglycinamide (FGAR). Formate is provided by PurU via hydrolysis of 10-formyl-tetrahydrofolate. The sequence is that of Formate-dependent phosphoribosylglycinamide formyltransferase from Shewanella baltica (strain OS185).